Consider the following 178-residue polypeptide: MIAIYPGSFDPITLGHLDIIERGDRLFEKVIVAVLCNPSKSPIFSLEKRVAQIRRCTQHLPNVEVASFTGLTTDYARQRNAGVLLRGLRVLSDFEKELQMAHTNKTLWDNIETVFLATSNEYSFLSSSVVKEIAKFGGSVDHLVPDNVAEDLYQWYKVHPPQVSPPTIMPTPQPFIEG.

Residue Ser8 coordinates substrate. ATP is bound by residues 8 to 9 (SF) and His16. Substrate contacts are provided by Lys40, Thr72, and Arg86. Residues 87–89 (GLR), Glu97, and 122–128 (YSFLSSS) each bind ATP.

It belongs to the bacterial CoaD family. As to quaternary structure, homohexamer. It depends on Mg(2+) as a cofactor.

The protein localises to the cytoplasm. The catalysed reaction is (R)-4'-phosphopantetheine + ATP + H(+) = 3'-dephospho-CoA + diphosphate. The protein operates within cofactor biosynthesis; coenzyme A biosynthesis; CoA from (R)-pantothenate: step 4/5. Its function is as follows. Reversibly transfers an adenylyl group from ATP to 4'-phosphopantetheine, yielding dephospho-CoA (dPCoA) and pyrophosphate. The polypeptide is Phosphopantetheine adenylyltransferase (Picosynechococcus sp. (strain ATCC 27264 / PCC 7002 / PR-6) (Agmenellum quadruplicatum)).